A 511-amino-acid chain; its full sequence is Probable dolichyl pyrophosphate Glc1Man9GlcNAc2 alpha-1,3-glucosyltransferase (511 aa).

The next 11 helical transmembrane spans lie at 4–24, 94–112, 124–144, 151–171, 210–230, 300–320, 332–352, 356–370, 377–394, 432–452, and 469–491; these read LFWHLVGIATGLKILLIPAYH, VYFQRLSVIVTDLVYVLGV, DTQQFFAASMLLLLNVGLIFV, YNGLLFGILLLSIGSLIRQRF, VVSAVGAVVKLLVVGLTPFAV, PAITPPVTFALTALFMLPILV, LVFLRAVVLCGCSSFVFGWHV, AILMVLLPLCLLTLV, YAYVLGIAGYFSLFPLLF, WLYMLGFMAIPLYEHLLSFLL, and YSALGVLYFFGAYYLYALGISWG.

This sequence belongs to the ALG6/ALG8 glucosyltransferase family.

It is found in the endoplasmic reticulum membrane. The catalysed reaction is an alpha-D-Glc-(1-&gt;3)-alpha-D-Man-(1-&gt;2)-alpha-D-Man-(1-&gt;2)-alpha-D-Man-(1-&gt;3)-[alpha-D-Man-(1-&gt;2)-alpha-D-Man-(1-&gt;3)-[alpha-D-Man-(1-&gt;2)-alpha-D-Man-(1-&gt;6)]-alpha-D-Man-(1-&gt;6)]-beta-D-Man-(1-&gt;4)-beta-D-GlcNAc-(1-&gt;4)-alpha-D-GlcNAc-diphospho-di-trans,poly-cis-dolichol + a di-trans,poly-cis-dolichyl beta-D-glucosyl phosphate = an alpha-D-Glc-(1-&gt;3)-alpha-D-Glc-(1-&gt;3)-alpha-D-Man-(1-&gt;2)-alpha-D-Man-(1-&gt;2)-alpha-D-Man-(1-&gt;3)-[alpha-D-Man-(1-&gt;2)-alpha-D-Man-(1-&gt;3)-[alpha-D-Man-(1-&gt;2)-alpha-D-Man-(1-&gt;6)]-alpha-D-Man-(1-&gt;6)]-beta-D-Man-(1-&gt;4)-beta-D-GlcNAc-(1-&gt;4)-alpha-D-GlcNAc-diphospho-di-trans,poly-cis-dolichol + a di-trans,poly-cis-dolichyl phosphate + H(+). It functions in the pathway protein modification; protein glycosylation. Adds the second glucose residue to the lipid-linked oligosaccharide precursor for N-linked glycosylation. Transfers glucose from dolichyl phosphate glucose (Dol-P-Glc) onto the lipid-linked oligosaccharide Glc(1)Man(9)GlcNAc(2)-PP-Dol. Functions in developmental processes such as germband extension, the apical constriction of mesoderm precursor cells and ventral furrow formation in early embryogenesis prior to gastrulation. Involved in the glycosylation and intracellular distribution of shg (E-cadherin). Function in cell intercalation in the lateral epidermis during germband extension may be due to its effect on shg. The chain is Probable dolichyl pyrophosphate Glc1Man9GlcNAc2 alpha-1,3-glucosyltransferase from Drosophila melanogaster (Fruit fly).